A 158-amino-acid chain; its full sequence is 6,7-dimethyl-8-ribityllumazine synthase (158 aa).

5-amino-6-(D-ribitylamino)uracil-binding positions include phenylalanine 23, 61-63 (SFE), and 85-87 (AVI). Residue 90 to 91 (ET) participates in (2S)-2-hydroxy-3-oxobutyl phosphate binding. The Proton donor role is filled by histidine 93. Residue phenylalanine 118 participates in 5-amino-6-(D-ribitylamino)uracil binding. Arginine 132 lines the (2S)-2-hydroxy-3-oxobutyl phosphate pocket.

The protein belongs to the DMRL synthase family.

It carries out the reaction (2S)-2-hydroxy-3-oxobutyl phosphate + 5-amino-6-(D-ribitylamino)uracil = 6,7-dimethyl-8-(1-D-ribityl)lumazine + phosphate + 2 H2O + H(+). Its pathway is cofactor biosynthesis; riboflavin biosynthesis; riboflavin from 2-hydroxy-3-oxobutyl phosphate and 5-amino-6-(D-ribitylamino)uracil: step 1/2. In terms of biological role, catalyzes the formation of 6,7-dimethyl-8-ribityllumazine by condensation of 5-amino-6-(D-ribitylamino)uracil with 3,4-dihydroxy-2-butanone 4-phosphate. This is the penultimate step in the biosynthesis of riboflavin. This is 6,7-dimethyl-8-ribityllumazine synthase from Prochlorococcus marinus (strain MIT 9215).